Consider the following 167-residue polypeptide: uncharacterized protein (167 aa).

4 helical membrane passes run 13–33 (LIYL…TWLI), 37–57 (VLAV…FLPY), 61–81 (WFAL…KIGE), and 103–123 (LLLI…LVPS).

The protein resides in the cell membrane. This is an uncharacterized protein from Haemophilus influenzae (strain ATCC 51907 / DSM 11121 / KW20 / Rd).